A 405-amino-acid polypeptide reads, in one-letter code: Aspartic protease (405 aa).

The N-terminal stretch at Met-1–Ala-21 is a signal peptide. Residues Ala-22 to Arg-81 constitute a propeptide, removed in mature form. The Peptidase A1 domain occupies Trp-97–Ala-402. The active site involves Asp-113. Cys-126 and Cys-131 are disulfide-bonded. Residue Asp-290 is part of the active site. Cys-332 and Cys-366 are disulfide-bonded.

It belongs to the peptidase A1 family.

It is found in the secreted. Inhibited by pepstatin A. Functionally, possesses acidic protease activity. Hydrolyzes casein and azoalbumin in vitro. This Phaffia rhodozyma (Yeast) protein is Aspartic protease.